Reading from the N-terminus, the 87-residue chain is Stannin (87 aa).

Topologically, residues 1–10 are mitochondrial intermembrane; the sequence is MSIMDHSPTT. A helical membrane pass occupies residues 11-31; it reads GVVTVIVILIAIAALGALILG. The Cytoplasmic segment spans residues 32–87; sequence CWCYLRLQRISQSEDEESIVGDGETKEPFLLVQYSAKGPCVERKAKLTPNGPEVHS. S49 is modified (phosphoserine).

It belongs to the stannin family. As to quaternary structure, monomer.

It is found in the mitochondrion outer membrane. Functionally, plays a role in the toxic effects of organotins. Plays a role in endosomal maturation. The protein is Stannin (SNN) of Bos taurus (Bovine).